The following is a 92-amino-acid chain: Cell division topological specificity factor (92 aa).

This sequence belongs to the MinE family.

In terms of biological role, prevents the cell division inhibition by proteins MinC and MinD at internal division sites while permitting inhibition at polar sites. This ensures cell division at the proper site by restricting the formation of a division septum at the midpoint of the long axis of the cell. In Symbiobacterium thermophilum (strain DSM 24528 / JCM 14929 / IAM 14863 / T), this protein is Cell division topological specificity factor.